The primary structure comprises 230 residues: Modulator of macroautophagy TMEM150B (230 aa).

M1 is a topological domain (cytoplasmic). Residues 2-22 (WAWALLPICLTIWATAGIWIV) form a helical membrane-spanning segment. Over 23–50 (YGMSVSNGSVNLTDGFPFISLCGTYPPQ) the chain is Extracellular. N-linked (GlcNAc...) asparagine glycosylation is found at N29 and N33. The helical transmembrane segment at 51-71 (SCVFGQVLNVGAMLGVWISVI) threads the bilayer. The Cytoplasmic segment spans residues 72–83 (RFQQIRDYGCHS). Residues 84–104 (VLNSVSLAMGLLCALGTSIVG) form a helical membrane-spanning segment. Residues 105–115 (NFQQSNQLETH) are Extracellular-facing. Residues 116–136 (LAGAFLAFVIGNIYFWMQTVL) form a helical membrane-spanning segment. Over 137 to 150 (TYMVKPKHGGCYIG) the chain is Cytoplasmic. Residues 151-171 (PIRFCLSVACTALIVLMAVFL) traverse the membrane as a helical segment. The Extracellular portion of the chain corresponds to 172–183 (KLNMKSISAICE). Residues 184 to 204 (WIVAMILFLLYGLFSVDFWHL) traverse the membrane as a helical segment. Residues 205-230 (DGHYFHVKKRTAIPNEVEVSTVTLNI) are Cytoplasmic-facing.

It belongs to the DRAM/TMEM150 family.

The protein resides in the cell membrane. It localises to the endosome membrane. It is found in the cytoplasmic vesicle. The protein localises to the autophagosome membrane. Modulator of macroautophagy that causes accumulation of autophagosomes under basal conditions and enhances autophagic flux. Represses cell death and promotes long-term clonogenic survival of cells grown in the absence of glucose in a macroautophagy-independent manner. May have some role in extracellular matrix engulfment or growth factor receptor recycling, both of which can modulate cell survival. The sequence is that of Modulator of macroautophagy TMEM150B from Xenopus tropicalis (Western clawed frog).